Here is a 502-residue protein sequence, read N- to C-terminus: ATP synthase subunit alpha (502 aa).

A disordered region spans residues 117 to 139 (GMGPVLTSKTRPIESPAPGVMDR). 169 to 176 (GDRQTGKT) contributes to the ATP binding site.

Belongs to the ATPase alpha/beta chains family. As to quaternary structure, F-type ATPases have 2 components, CF(1) - the catalytic core - and CF(0) - the membrane proton channel. CF(1) has five subunits: alpha(3), beta(3), gamma(1), delta(1), epsilon(1). CF(0) has three main subunits: a(1), b(2) and c(9-12). The alpha and beta chains form an alternating ring which encloses part of the gamma chain. CF(1) is attached to CF(0) by a central stalk formed by the gamma and epsilon chains, while a peripheral stalk is formed by the delta and b chains.

It is found in the cell membrane. It carries out the reaction ATP + H2O + 4 H(+)(in) = ADP + phosphate + 5 H(+)(out). Produces ATP from ADP in the presence of a proton gradient across the membrane. The alpha chain is a regulatory subunit. This Bacillus licheniformis (strain ATCC 14580 / DSM 13 / JCM 2505 / CCUG 7422 / NBRC 12200 / NCIMB 9375 / NCTC 10341 / NRRL NRS-1264 / Gibson 46) protein is ATP synthase subunit alpha.